We begin with the raw amino-acid sequence, 161 residues long: Glycine/sarcosine/betaine reductase complex component A2 (161 aa).

Residue Sec-42 is part of the active site. Sec-42 is a non-standard amino acid (selenocysteine).

Belongs to the GrdA family. Monomer. Component of the glycine, sarcosine and betaine reductase complexes, together with components B and C.

The enzyme catalyses acetyl phosphate + [thioredoxin]-disulfide + NH4(+) + H2O = [thioredoxin]-dithiol + glycine + phosphate + H(+). It carries out the reaction acetyl phosphate + methylamine + [thioredoxin]-disulfide + H2O = sarcosine + [thioredoxin]-dithiol + phosphate + H(+). It catalyses the reaction acetyl phosphate + trimethylamine + [thioredoxin]-disulfide + H2O = glycine betaine + [thioredoxin]-dithiol + phosphate + H(+). Its function is as follows. In the first step of glycine, betaine and sarcosine reductases, the substrate is bound to component PB via a Schiff base intermediate. Then the PB-activated substrate is nucleophilically attacked by the selenol anion of component PA to transform it to a carboxymethylated selenoether and the respective amine. By action of component PC, acetyl phosphate is formed, leaving component PA in its oxidized state. Finally component PA becomes reduced by the thioredoxin system to start a new catalytic cycle of reductive deamination. This Photobacterium profundum (strain SS9) protein is Glycine/sarcosine/betaine reductase complex component A2 (grdA2).